A 319-amino-acid chain; its full sequence is Tetrahydromethanopterin S-methyltransferase subunit H (319 aa).

The protein belongs to the MtrH family. As to quaternary structure, the complex is composed of 8 subunits; MtrA, MtrB, MtrC, MtrD, MtrE, MtrF, MtrG and MtrH.

It carries out the reaction 5-methyl-5,6,7,8-tetrahydromethanopterin + coenzyme M + 2 Na(+)(in) = 5,6,7,8-tetrahydromethanopterin + methyl-coenzyme M + 2 Na(+)(out). It participates in one-carbon metabolism; methanogenesis from CO(2); methyl-coenzyme M from 5,10-methylene-5,6,7,8-tetrahydromethanopterin: step 2/2. In terms of biological role, part of a complex that catalyzes the formation of methyl-coenzyme M and tetrahydromethanopterin from coenzyme M and methyl-tetrahydromethanopterin. This is an energy-conserving, sodium-ion translocating step. MtrH catalyzes the transfer of the methyl group from methyl-tetrahydromethanopterin to the corrinoid prosthetic group of MtrA. The protein is Tetrahydromethanopterin S-methyltransferase subunit H of Methanocaldococcus jannaschii (strain ATCC 43067 / DSM 2661 / JAL-1 / JCM 10045 / NBRC 100440) (Methanococcus jannaschii).